Here is a 242-residue protein sequence, read N- to C-terminus: MPDYQKEIERIGEFLRKIIADRKAVIGISGGIDSSVTLGILSKFFLHENIKAVFMPDATTPKSDYDDVDVLASTFGVKYSTVNIQNIVDTFSKTLSAVDKGAIGNIKSRIRMIVLYYFANIYNGIVVGTTNRTELLLGYYTKYGDGGCDVEPIEHLYKRDIYEIARLLGVPESIIKKKPTAGLWQGQTDEDEIGMPYSKIDDILSSIFDKGELREDPDFKKILDLHSKSDHKRRLPYSLSPD.

27–34 lines the ATP pocket; sequence GISGGIDS. Asp-33 contributes to the Mg(2+) binding site. Arg-109 lines the deamido-NAD(+) pocket. Thr-129 is a binding site for ATP. Glu-134 contributes to the Mg(2+) binding site. Positions 142 and 149 each coordinate deamido-NAD(+). ATP-binding residues include Lys-158 and Thr-180. Position 231-232 (231-232) interacts with deamido-NAD(+); sequence HK.

The protein belongs to the NAD synthetase family. In terms of assembly, homodimer.

It carries out the reaction deamido-NAD(+) + NH4(+) + ATP = AMP + diphosphate + NAD(+) + H(+). Its pathway is cofactor biosynthesis; NAD(+) biosynthesis; NAD(+) from deamido-NAD(+) (ammonia route): step 1/1. Functionally, catalyzes the ATP-dependent amidation of deamido-NAD to form NAD. Uses ammonia as a nitrogen source. The chain is NH(3)-dependent NAD(+) synthetase from Thermoplasma volcanium (strain ATCC 51530 / DSM 4299 / JCM 9571 / NBRC 15438 / GSS1).